A 268-amino-acid chain; its full sequence is Undecaprenyl-diphosphatase (268 aa).

The next 8 membrane-spanning stretches (helical) occupy residues 3–23 (VFNLLEAAFLGLIEGLTEFIP), 46–66 (FEVLIQLGAILAILTVYSAKL), 84–104 (FGILVAFLPAAVIGALAHGFI), 107–127 (VLFETPMLVCIMLIIGGFILL), 144–164 (YPLPMCLAIGFIQCLAMIPGV), 184–204 (AAEFSFFLAMPTMAGAFAYDL), 218–238 (LIGVGFVMAFISGVFVVRYLL), and 248–268 (LFGWWRLIVGSVGLAALLVWG).

It belongs to the UppP family.

It localises to the cell inner membrane. The catalysed reaction is di-trans,octa-cis-undecaprenyl diphosphate + H2O = di-trans,octa-cis-undecaprenyl phosphate + phosphate + H(+). Catalyzes the dephosphorylation of undecaprenyl diphosphate (UPP). Confers resistance to bacitracin. The protein is Undecaprenyl-diphosphatase of Brucella anthropi (strain ATCC 49188 / DSM 6882 / CCUG 24695 / JCM 21032 / LMG 3331 / NBRC 15819 / NCTC 12168 / Alc 37) (Ochrobactrum anthropi).